The following is a 457-amino-acid chain: NADH-quinone oxidoreductase subunit D (457 aa).

Positions 1–23 (MSTHTETPVDGSAETITGAQPYE) are disordered.

This sequence belongs to the complex I 49 kDa subunit family. As to quaternary structure, NDH-1 is composed of 14 different subunits. Subunits NuoB, C, D, E, F, and G constitute the peripheral sector of the complex.

It localises to the cell membrane. The catalysed reaction is a quinone + NADH + 5 H(+)(in) = a quinol + NAD(+) + 4 H(+)(out). In terms of biological role, NDH-1 shuttles electrons from NADH, via FMN and iron-sulfur (Fe-S) centers, to quinones in the respiratory chain. The immediate electron acceptor for the enzyme in this species is believed to be a menaquinone. Couples the redox reaction to proton translocation (for every two electrons transferred, four hydrogen ions are translocated across the cytoplasmic membrane), and thus conserves the redox energy in a proton gradient. This is NADH-quinone oxidoreductase subunit D from Parafrankia sp. (strain EAN1pec).